The primary structure comprises 554 residues: Glucose-6-phosphate isomerase (554 aa).

Glu359 (proton donor) is an active-site residue. Active-site residues include His390 and Lys518.

It belongs to the GPI family.

The protein localises to the cytoplasm. The enzyme catalyses alpha-D-glucose 6-phosphate = beta-D-fructose 6-phosphate. It participates in carbohydrate biosynthesis; gluconeogenesis. The protein operates within carbohydrate degradation; glycolysis; D-glyceraldehyde 3-phosphate and glycerone phosphate from D-glucose: step 2/4. In terms of biological role, catalyzes the reversible isomerization of glucose-6-phosphate to fructose-6-phosphate. The chain is Glucose-6-phosphate isomerase from Pseudomonas fluorescens (strain SBW25).